Reading from the N-terminus, the 434-residue chain is Alpha-enolase (434 aa).

S2 bears the N-acetylserine mark. N6-acetyllysine is present on K5. Position 27 is a phosphoserine (S27). Mg(2+) is bound at residue S40. Y44 is modified (phosphotyrosine). K60 carries the post-translational modification N6-acetyllysine; alternate. K60 carries the post-translational modification N6-succinyllysine; alternate. Residues K64 and K71 each carry the N6-acetyllysine modification. K89 is modified (N6-acetyllysine; alternate). The residue at position 89 (K89) is an N6-succinyllysine; alternate. An N6-acetyllysine mark is found at K92 and K126. The substrate site is built by H158 and E167. N6-acetyllysine occurs at positions 193 and 199. K202 carries the N6-acetyllysine; alternate modification. Residue K202 forms a Glycyl lysine isopeptide (Lys-Gly) (interchain with G-Cter in SUMO2); alternate linkage. E210 (proton donor) is an active-site residue. Residues K228 and K233 each carry the N6-acetyllysine; alternate modification. K228 bears the N6-succinyllysine; alternate mark. The residue at position 228 (K228) is an N6-(2-hydroxyisobutyryl)lysine; alternate. K233 is subject to N6-malonyllysine; alternate. A Mg(2+)-binding site is contributed by D245. Residue S254 is modified to Phosphoserine. Position 256 is an N6-acetyllysine (K256). Residues S263 and S272 each carry the phosphoserine modification. Residue K281 is modified to N6-acetyllysine; alternate. The residue at position 281 (K281) is an N6-(2-hydroxyisobutyryl)lysine; alternate. K285 carries the post-translational modification N6-acetyllysine. Phosphotyrosine is present on Y287. Position 291 is a phosphoserine (S291). Residues E293 and D318 each contribute to the Mg(2+) site. Substrate-binding residues include E293 and D318. N6-acetyllysine occurs at positions 335 and 343. The active-site Proton acceptor is the K343. Substrate-binding positions include 370–373 and K394; that span reads SHRS. The interval 405 to 434 is required for interaction with PLG; sequence AKYNQLLRIEEELGSKAKFAGRNFRNPLAK. Position 406 is an N6-acetyllysine (K406). The residue at position 420 (K420) is an N6-acetyllysine; alternate. N6-succinyllysine; alternate is present on K420. The residue at position 420 (K420) is an N6-malonyllysine; alternate.

Belongs to the enolase family. Mammalian enolase is composed of 3 isozyme subunits, alpha, beta and gamma, which can form homodimers or heterodimers which are cell-type and development-specific. ENO1 interacts with PLG in the neuronal plasma membrane and promotes its activation. The C-terminal lysine is required for this binding. Interacts with ENO4 and PGAM2. Interacts with CMTM6. Requires Mg(2+) as cofactor. Post-translationally, ISGylated. Lysine 2-hydroxyisobutyrylation (Khib) by p300/EP300 activates the phosphopyruvate hydratase activity.

It localises to the cytoplasm. The protein localises to the cell membrane. The enzyme catalyses (2R)-2-phosphoglycerate = phosphoenolpyruvate + H2O. The protein operates within carbohydrate degradation; glycolysis; pyruvate from D-glyceraldehyde 3-phosphate: step 4/5. Functionally, glycolytic enzyme the catalyzes the conversion of 2-phosphoglycerate to phosphoenolpyruvate. In addition to glycolysis, involved in various processes such as growth control, hypoxia tolerance and allergic responses. May also function in the intravascular and pericellular fibrinolytic system due to its ability to serve as a receptor and activator of plasminogen on the cell surface of several cell-types such as leukocytes and neurons. Stimulates immunoglobulin production. In Macaca fascicularis (Crab-eating macaque), this protein is Alpha-enolase (ENO1).